A 312-amino-acid polypeptide reads, in one-letter code: Olfactory receptor 7G3 (312 aa).

Residues 1–25 (MKAGNFSDTPEFFLLGLSGDPELQP) are Extracellular-facing. N-linked (GlcNAc...) asparagine glycosylation occurs at Asn5. The chain crosses the membrane as a helical span at residues 26–46 (ILFMLFLSMYLATMLGNLLII). The Cytoplasmic segment spans residues 47-54 (LAVNSDSH). The chain crosses the membrane as a helical span at residues 55-75 (LHTPMYFLLSILSLVDICFTS). At 76 to 99 (TTMPKMLVNIQAQAQSINYTGCLT) the chain is on the extracellular side. N-linked (GlcNAc...) asparagine glycosylation is present at Asn93. A disulfide bond links Cys97 and Cys189. Residues 100 to 120 (QICFVLVFVGLENGILVMMAY) form a helical membrane-spanning segment. Over 121–139 (DRFVAICHPLRYNVIMNPK) the chain is Cytoplasmic. A helical membrane pass occupies residues 140-160 (LCGLLLLLSFIVSVLDALLHT). At 161–197 (LMVLQLTFCIDLEIPHFFCELAHILKLACSDVLINNI) the chain is on the extracellular side. A helical membrane pass occupies residues 198-217 (LVYLVTSLLGVVPLSGIIFS). At 218 to 237 (YTRIVSSVMKIPSAGGKYKA) the chain is on the cytoplasmic side. Residues 238–258 (FSICGSHLIVVSLFYGTGFGV) traverse the membrane as a helical segment. Topologically, residues 259–271 (YLSSGATHSSRKG) are extracellular. A helical membrane pass occupies residues 272-292 (AIASVMYTVVTPMLNPLIYSL). Residues 293-312 (RNKDMLKALRKLISRIPSFH) lie on the Cytoplasmic side of the membrane.

This sequence belongs to the G-protein coupled receptor 1 family.

It is found in the cell membrane. Odorant receptor. This is Olfactory receptor 7G3 (OR7G3) from Homo sapiens (Human).